Consider the following 324-residue polypeptide: Probable UDP-sugar transporter protein SLC35A4 (324 aa).

Residues 1–18 (MSVEDGGMPGLARPKQAR) are Cytoplasmic-facing. A helical membrane pass occupies residues 19–39 (WTLMLFLSTAMYGAHAPFLAL). At 40 to 52 (CHVDGRVPFRPSS) the chain is on the lumenal side. Residues 53-73 (AVLLTELTKLLLCAFSLLVGW) form a helical membrane-spanning segment. The Cytoplasmic segment spans residues 74-85 (QTWPQGTPPWRQ). Residues 86-106 (AAPFALSALLYGANNNLVIYL) traverse the membrane as a helical segment. Residues 107–142 (QRYMDPSTYQVLSNLKIGSTALLYCLCLGHRLSARQ) lie on the Lumenal side of the membrane. A helical membrane pass occupies residues 143–163 (GLALLLLMAAGACYASGGFQE). The Cytoplasmic segment spans residues 164–180 (PGNTLPGPRSAAGARPM). Residues 181–201 (PLHITPLGLLLLILYCLISGL) form a helical membrane-spanning segment. Topologically, residues 202–214 (SSVYTELIMKRQR) are lumenal. Residues 215–235 (LPLALQNLFLYTFGVILNLGL) form a helical membrane-spanning segment. Residues 236–248 (YAGSGPGPGFLEG) lie on the Cytoplasmic side of the membrane. Residues 249 to 271 (FSGWAVLVVLNQAVNGLLMSAVM) traverse the membrane as a helical segment. Topologically, residues 272-279 (KHGSSITR) are lumenal. A helical transmembrane segment spans residues 280 to 300 (LFIVSCSLVVNAVLSAVLLQL). Residues 301-324 (QLTATFFLAALLIGLAVCLYYGSP) are Cytoplasmic-facing.

Belongs to the nucleotide-sugar transporter family. SLC35A subfamily. In terms of assembly, found in a complex with SLC35A2 and SLC35A3. As to expression, expressed in the kidney, lung, testis, and prostate. Expressed in the brain by sets of neurons, such as the pyramidal cells of the cortex, the Purkinje cells of the cerebellum, and the motoneurons of the brainstem.

Its subcellular location is the golgi apparatus membrane. It catalyses the reaction CDP-L-ribitol(in) + CDP(out) = CDP-L-ribitol(out) + CDP(in). Mediates the transport of CDP-ribitol. Does not exhibit CMP-sialic acid, UDP-galactose and UDP-N-acetylglucosamine transport activity. The protein is Probable UDP-sugar transporter protein SLC35A4 of Rattus norvegicus (Rat).